The chain runs to 300 residues: Geranylgeranyl pyrophosphate synthase (300 aa).

Methionine 1 is modified (N-acetylmethionine). Positions 25, 28, and 57 each coordinate isopentenyl diphosphate. Mg(2+) contacts are provided by aspartate 64 and aspartate 68. A dimethylallyl diphosphate-binding site is contributed by arginine 73. Arginine 74 contacts isopentenyl diphosphate. Positions 151, 152, 185, 202, and 212 each coordinate dimethylallyl diphosphate.

The protein belongs to the FPP/GGPP synthase family. As to quaternary structure, homohexamer; trimer of homodimers. Mg(2+) is required as a cofactor.

It is found in the cytoplasm. Its subcellular location is the perinuclear region. The protein resides in the myofibril. It localises to the sarcomere. The protein localises to the z line. It carries out the reaction isopentenyl diphosphate + dimethylallyl diphosphate = (2E)-geranyl diphosphate + diphosphate. It catalyses the reaction isopentenyl diphosphate + (2E)-geranyl diphosphate = (2E,6E)-farnesyl diphosphate + diphosphate. The enzyme catalyses isopentenyl diphosphate + (2E,6E)-farnesyl diphosphate = (2E,6E,10E)-geranylgeranyl diphosphate + diphosphate. Its pathway is isoprenoid biosynthesis; farnesyl diphosphate biosynthesis; farnesyl diphosphate from geranyl diphosphate and isopentenyl diphosphate: step 1/1. The protein operates within isoprenoid biosynthesis; geranyl diphosphate biosynthesis; geranyl diphosphate from dimethylallyl diphosphate and isopentenyl diphosphate: step 1/1. It functions in the pathway isoprenoid biosynthesis; geranylgeranyl diphosphate biosynthesis; geranylgeranyl diphosphate from farnesyl diphosphate and isopentenyl diphosphate: step 1/1. Functionally, catalyzes the trans-addition of the three molecules of IPP onto DMAPP to form geranylgeranyl pyrophosphate, an important precursor of carotenoids and geranylated proteins. The polypeptide is Geranylgeranyl pyrophosphate synthase (GGPS1) (Bos taurus (Bovine)).